The following is a 1199-amino-acid chain: MPLTGVEPARMNRKKGDKGFESPRPYKLTHQVVCINNINFQRKSVVGFVELTIFPTVANLNRIKLNSKQCRIYRVRINDLEAAFIYNDPTLEVCHSESKQRNLNYFSNAYAAAVSAVDPDAGNGELCIKVPSELWKHVDELKVLKIHINFSLDQPKGGLHFVVPSVEGSMAERGAHVFSCGYQNSTRFWFPCVDSYSELCTWKLEFTVDAAMVAVSNGDLVETVYTHDMRKKTFHYMLTIPTAASNISLAIGPFEILVDPYMHEVTHFCLPQLLPLLKHTTSYLHEVFEFYEEILTCRYPYSCFKTVFIDEAYVEVAAYASMSIFSTNLLHSAMIIDETPLTRRCLAQSLAQQFFGCFISRMSWSDEWVLKGISGYIYGLWMKKTFGVNEYRHWIKEELDKIVAYELKTGGVLLHPIFGGGKEKDNPASHLHFSIKHPHTLSWEYYSMFQCKAHLVMRLIENRISMEFMLQVFNKLLSLASTASSQKFQSHMWSQMLVSTSGFLKSISNVSGKDIQPLIKQWVDQSGVVKFYGSFAFNRKRNVLELEIKQDYTSPGTQKYVGPLKVTVQELDGSFNHTLQIEENSLKHDIPCHSKSRRNKKKKIPLMNGEEVDMDLSAMDADSPLLWIRIDPDMSVLRKVEFEQADFMWQYQLRYERDVVAQQESILALEKFPTPASRLALTDILEQEQCFYRVRMSACFCLAKIANSMVSTWTGPPAMKSLFTRMFCCKSCPNIVKTNNFMSFQSYFLQKTMPVAMALLRDVHNLCPKEVLTFILDLIKYNDNRKNKFSDNYYRAEMIDALANSVTPAVSVNNEVRTLDNLNPDVRLILEEITRFLNMEKLLPSYRHTITVSCLRAIRVLQKNGHVPSDPALFKSYAEYGHFVDIRIAALEAVVDYTKVDRSYEELQWLLNMIQNDPVPYVRHKILNMLTKNPPFTKNMESPLCNEALVDQLWKLMNSGTSHDWRLRCGAVDLYFTLFGLSRPSCLPLPELGLVLNLKEKKAVLNPTIIPESVAGNQEAANNPSSHPQLVGFQNPFSSSQDEEEIDMDTVHDSQAFISHHLNMLERPSTPGLSKYRPASSRSALIPQHSAGCDSTPTTKPQWSLELARKGTGKEQAPLEMSMHPAASAPLSVFTKESTASKHSDHHHHHHHEHKKKKKKHKHKHKHKHKHDSKEKDKEPFTFSSPASGRSIRSPSLSD.

Disordered stretches follow at residues 1–23 (MPLTGVEPARMNRKKGDKGFESP), 1067–1102 (RPSTPGLSKYRPASSRSALIPQHSAGCDSTPTTKPQ), and 1136–1199 (KEST…SLSD). Residues 1093 to 1102 (CDSTPTTKPQ) show a composition bias toward polar residues. Positions 1144-1171 (SDHHHHHHHEHKKKKKKHKHKHKHKHKH) are enriched in basic residues. A compositionally biased stretch (polar residues) spans 1182–1199 (TFSSPASGRSIRSPSLSD). Phosphoserine occurs at positions 1185, 1188, 1194, 1196, and 1198.

This sequence belongs to the TAF2 family. In terms of assembly, component of the TFIID basal transcription factor complex, composed of TATA-box-binding protein TBP, and a number of TBP-associated factors (TAFs), including TAF1, TAF2, TAF3, TAF4, TAF5, TAF6, TAF7, TAF8, TAF9, TAF10, TAF11, TAF12 and TAF13. Interacts with TAF2C1. Component of the TFTC-HAT complex. In terms of tissue distribution, expressed in all tissues tested.

The protein resides in the nucleus. Its function is as follows. The TFIID basal transcription factor complex plays a major role in the initiation of RNA polymerase II (Pol II)-dependent transcription. TFIID recognizes and binds promoters with or without a TATA box via its subunit TBP, a TATA-box-binding protein, and promotes assembly of the pre-initiation complex (PIC). The TFIID complex consists of TBP and TBP-associated factors (TAFs), including TAF1, TAF2, TAF3, TAF4, TAF5, TAF6, TAF7, TAF8, TAF9, TAF10, TAF11, TAF12 and TAF13. TAF2 forms a promoter DNA binding subcomplex of TFIID, together with TAF7 and TAF1. The sequence is that of Transcription initiation factor TFIID subunit 2 (TAF2) from Homo sapiens (Human).